We begin with the raw amino-acid sequence, 429 residues long: MSTTTTASIEGYKLGKVIIEGKTKQVYDLPEQPGLCLLLSKDRITAGDGVKAHDLAGKAEISNTTNGQVFRLLNEAGIRTAYVKQCGAKAFIARKCQMIPIEWVTRRLATGSFLKRNVGVPEGYRFSPPKQETFFKDDANHDPQWSEEQIVSAKFELNGLVIGQDEVDIMRRTTLLVFEILERAWQTKNCALIDMKVEFGICDDGNIVLADIIDSDSWRLWPAGDKRLMVDKQVYRNLASVTASDLDTVKRNFIWVAEQLADIVPKKDHLVVILMGSASDISHSEKIATSCRSLGLNVELRVSSAHKGPEETLRIVREYESVMSNLIFVAVAGRSNGLGPVVSGSTNYPVINCPPVKSDNMQVDVWSSLNLPSGLGCATVLYPEAAALHAATILGLGNFMVWSKLRVKALNNFITLKKADKELRGVRNA.

An SAICAR synthetase region spans residues 7 to 264 (ASIEGYKLGK…WVAEQLADIV (258 aa)). Residues 7–264 (ASIEGYKLGK…WVAEQLADIV (258 aa)) form an SAICAR synthetase domain region. Positions 265–429 (PKKDHLVVIL…DKELRGVRNA (165 aa)) are AIR carboxylase. The AIR carboxylase domain stretch occupies residues 270–429 (LVVILMGSAS…DKELRGVRNA (160 aa)). Serine 335 contacts CO2.

This sequence in the N-terminal section; belongs to the SAICAR synthetase family. In the C-terminal section; belongs to the AIR carboxylase family. Class II subfamily. Homooctamer.

The catalysed reaction is 5-amino-1-(5-phospho-D-ribosyl)imidazole-4-carboxylate + L-aspartate + ATP = (2S)-2-[5-amino-1-(5-phospho-beta-D-ribosyl)imidazole-4-carboxamido]succinate + ADP + phosphate + 2 H(+). It catalyses the reaction 5-amino-1-(5-phospho-D-ribosyl)imidazole-4-carboxylate + H(+) = 5-amino-1-(5-phospho-beta-D-ribosyl)imidazole + CO2. It participates in purine metabolism; IMP biosynthesis via de novo pathway; 5-amino-1-(5-phospho-D-ribosyl)imidazole-4-carboxamide from 5-amino-1-(5-phospho-D-ribosyl)imidazole-4-carboxylate: step 1/2. It functions in the pathway purine metabolism; IMP biosynthesis via de novo pathway; 5-amino-1-(5-phospho-D-ribosyl)imidazole-4-carboxylate from 5-amino-1-(5-phospho-D-ribosyl)imidazole (carboxylase route): step 1/1. Bifunctional phosphoribosylaminoimidazole carboxylase and phosphoribosylaminoimidazole succinocarboxamide synthetase catalyzing two reactions of the de novo purine biosynthetic pathway. This Drosophila melanogaster (Fruit fly) protein is Bifunctional phosphoribosylaminoimidazole carboxylase/phosphoribosylaminoimidazole succinocarboxamide synthetase.